We begin with the raw amino-acid sequence, 375 residues long: Palmitoyltransferase PFA4 (375 aa).

The Cytoplasmic segment spans residues 1–9; sequence MAVLVKWPW. Residues 10 to 30 form a helical membrane-spanning segment; the sequence is LGVAIPCFLISFTGYFAHFFV. Residues 31–33 are Lumenal-facing; sequence LTN. A helical transmembrane segment spans residues 34-54; sequence FLSFKELLWFQVSLSMIWISY. Over 55–121 the chain is Cytoplasmic; that stretch reads WKAIYKNPGR…MNCVGYKNFP (67 aa). The DHHC domain occupies 78–128; that stretch reads NYCTKCETYKPERTHHCKRCNQCVLVMDHHCPWTMNCVGYKNFPHFIRFLF. Cys-108 acts as the S-palmitoyl cysteine intermediate in catalysis. A helical membrane pass occupies residues 122–142; sequence HFIRFLFWIIATTGILLHYFV. Over 143 to 164 the chain is Lumenal; it reads KRIKFTWVNRYATANLVSKQEL. The helical transmembrane segment at 165-185 threads the bilayer; it reads IFLTILTPLDAFILLTISLLF. The Cytoplasmic portion of the chain corresponds to 186–375; it reads VRCVKNQIVN…EHFGVDVEVE (190 aa).

It belongs to the DHHC palmitoyltransferase family. PFA4 subfamily.

It localises to the endoplasmic reticulum membrane. It carries out the reaction L-cysteinyl-[protein] + hexadecanoyl-CoA = S-hexadecanoyl-L-cysteinyl-[protein] + CoA. Functionally, mediates the reversible addition of palmitate to target proteins, thereby regulating their membrane association and biological function. This chain is Palmitoyltransferase PFA4, found in Eremothecium gossypii (strain ATCC 10895 / CBS 109.51 / FGSC 9923 / NRRL Y-1056) (Yeast).